We begin with the raw amino-acid sequence, 341 residues long: NADH-ubiquinone oxidoreductase chain 2 (341 aa).

A run of 10 helical transmembrane segments spans residues 8–28, 61–81, 95–115, 121–141, 146–166, 174–194, 195–215, 238–258, 273–293, and 321–341; these read ILFT…NSWL, FLTQ…LMLA, MIIM…FWFP, LTWM…LMLI, IKNL…IGGL, LMAF…MISE, SIWL…TFMF, FSLF…GFLP, FLLT…LRIC, and LIMT…FFML.

This sequence belongs to the complex I subunit 2 family.

The protein resides in the mitochondrion inner membrane. The enzyme catalyses a ubiquinone + NADH + 5 H(+)(in) = a ubiquinol + NAD(+) + 4 H(+)(out). In terms of biological role, core subunit of the mitochondrial membrane respiratory chain NADH dehydrogenase (Complex I) that is believed to belong to the minimal assembly required for catalysis. Complex I functions in the transfer of electrons from NADH to the respiratory chain. The immediate electron acceptor for the enzyme is believed to be ubiquinone. The sequence is that of NADH-ubiquinone oxidoreductase chain 2 (mt:ND2) from Drosophila yakuba (Fruit fly).